The primary structure comprises 599 residues: DNA primase (599 aa).

The CHC2-type zinc-finger motif lies at 40–64; it reads CPFHGENTPSFSVSPDKQLYHCFGC. Residues 259–342 form the Toprim domain; it reads NEAVLFEGYV…KVAMIPDGLD (84 aa). Mg(2+) is bound by residues E265, D309, and D311.

It belongs to the DnaG primase family. In terms of assembly, monomer. Interacts with DnaB. Requires Zn(2+) as cofactor. The cofactor is Mg(2+).

It catalyses the reaction ssDNA + n NTP = ssDNA/pppN(pN)n-1 hybrid + (n-1) diphosphate.. RNA polymerase that catalyzes the synthesis of short RNA molecules used as primers for DNA polymerase during DNA replication. The protein is DNA primase of Halalkalibacterium halodurans (strain ATCC BAA-125 / DSM 18197 / FERM 7344 / JCM 9153 / C-125) (Bacillus halodurans).